A 330-amino-acid chain; its full sequence is Alpha-1,6-glucosyltransferase (330 aa).

It belongs to the glycosyltransferase group 1 family. The cofactor is Does not require a metal cofactor..

The protein resides in the cytoplasm. It participates in protein modification; protein glycosylation. Catalyzes the transfer of a glucose moiety from UDP-glucose to another glucose that is N-linked to an asparagine within a peptide or protein. Can act in a repetitive manner, and this way it elongates the N-linked glucose by a glycan chain consisting of several alpha-1-&gt;6 linked glucose residues. Is able to add up to six glucose units in vitro. Cannot use UDP-Gal, UDP-GlcNAc or UDP-GalNAc as a substrate donor. In Actinobacillus pleuropneumoniae serotype 7 (strain AP76), this protein is Alpha-1,6-glucosyltransferase.